The chain runs to 803 residues: Zinc finger X-linked protein ZXDB (803 aa).

Disordered regions lie at residues 1-91 (MEIP…GGDD), 120-140 (EAEE…AGPT), and 218-260 (AAHP…GPRG). Positions 13-26 (LQGGGGGGIPAGGG) are enriched in gly residues. 10 C2H2-type zinc fingers span residues 271–295 (YLCP…LLTH), 304–328 (FKCP…LQSH), 334–358 (FGCP…MKGH), 364–386 (FKCE…QRSH), 393–417 (YQCA…NRAH), 424–448 (FSCS…LRSH), 454–478 (FLCD…KRKH), 484–508 (FMCP…SITH), 514–538 (FVCP…SKKH), and 547–572 (SRCP…VKRH). A required for interaction with ZXDC region spans residues 271 to 577 (YLCPEAQCGQ…MVKRHKVGQD (307 aa)). Residues 576–703 (QDLLAQLEAA…NMDEVSSVSV (128 aa)) form a required for transcriptional activation region.

This sequence belongs to the ZXD family. Self-associates. Interacts with ZXDC and CIITA. As to expression, may be expressed in brain, heart, kidney, liver, lung, muscle and placenta.

Its subcellular location is the nucleus. Cooperates with CIITA to promote transcription of MHC class I and MHC class II genes. This is Zinc finger X-linked protein ZXDB (ZXDB) from Homo sapiens (Human).